The primary structure comprises 45 residues: Large ribosomal subunit protein bL34 (45 aa).

The protein belongs to the bacterial ribosomal protein bL34 family.

This chain is Large ribosomal subunit protein bL34, found in Corynebacterium urealyticum (strain ATCC 43042 / DSM 7109).